The primary structure comprises 453 residues: Ribulose bisphosphate carboxylase large chain (453 aa).

A propeptide spanning residues 1-2 (MS) is cleaved from the precursor. An N-acetylproline modification is found at Pro3. An N6,N6,N6-trimethyllysine modification is found at Lys14. Positions 123 and 173 each coordinate substrate. Lys175 serves as the catalytic Proton acceptor. Residue Lys177 coordinates substrate. Mg(2+) is bound by residues Lys201, Asp203, and Glu204. Lys201 is modified (N6-carboxylysine). Catalysis depends on His294, which acts as the Proton acceptor. Residues Arg295, His327, and Ser379 each contribute to the substrate site.

It belongs to the RuBisCO large chain family. Type I subfamily. As to quaternary structure, heterohexadecamer of 8 large chains and 8 small chains; disulfide-linked. The disulfide link is formed within the large subunit homodimers. Mg(2+) serves as cofactor. The disulfide bond which can form in the large chain dimeric partners within the hexadecamer appears to be associated with oxidative stress and protein turnover.

Its subcellular location is the plastid. The protein localises to the chloroplast. The enzyme catalyses 2 (2R)-3-phosphoglycerate + 2 H(+) = D-ribulose 1,5-bisphosphate + CO2 + H2O. The catalysed reaction is D-ribulose 1,5-bisphosphate + O2 = 2-phosphoglycolate + (2R)-3-phosphoglycerate + 2 H(+). Functionally, ruBisCO catalyzes two reactions: the carboxylation of D-ribulose 1,5-bisphosphate, the primary event in carbon dioxide fixation, as well as the oxidative fragmentation of the pentose substrate in the photorespiration process. Both reactions occur simultaneously and in competition at the same active site. The chain is Ribulose bisphosphate carboxylase large chain from Galium corsicum.